The primary structure comprises 89 residues: Small ribosomal subunit protein uS15 (89 aa).

It belongs to the universal ribosomal protein uS15 family. Part of the 30S ribosomal subunit. Forms a bridge to the 50S subunit in the 70S ribosome, contacting the 23S rRNA.

One of the primary rRNA binding proteins, it binds directly to 16S rRNA where it helps nucleate assembly of the platform of the 30S subunit by binding and bridging several RNA helices of the 16S rRNA. Its function is as follows. Forms an intersubunit bridge (bridge B4) with the 23S rRNA of the 50S subunit in the ribosome. In Cereibacter sphaeroides (strain ATCC 17023 / DSM 158 / JCM 6121 / CCUG 31486 / LMG 2827 / NBRC 12203 / NCIMB 8253 / ATH 2.4.1.) (Rhodobacter sphaeroides), this protein is Small ribosomal subunit protein uS15.